The sequence spans 154 residues: Transcriptional repressor NrdR (154 aa).

A zinc finger lies at 3–34 (CPFCGANDTKVIDSRLVAEGEQVRRRRECLAC). The 91-residue stretch at 49–139 (PRLIKQDGSR…VYRRFQDLNE (91 aa)) folds into the ATP-cone domain.

This sequence belongs to the NrdR family. Requires Zn(2+) as cofactor.

Negatively regulates transcription of bacterial ribonucleotide reductase nrd genes and operons by binding to NrdR-boxes. The protein is Transcriptional repressor NrdR of Pseudomonas savastanoi pv. phaseolicola (strain 1448A / Race 6) (Pseudomonas syringae pv. phaseolicola (strain 1448A / Race 6)).